A 309-amino-acid polypeptide reads, in one-letter code: MTKKVGLLVMAYGTPYKDEDIERYYTDIRHGHKPSEEMIADLRGRYHAIGGLSPLAKITEAQAYGLEKALNDAQDEVEFKAYIGLKHIEPFIEDAVEAMHKDGIEEAISIVLAPHYSSFSVEAYNKRAKDAADKLGGIHIQAINDWYKQPKFIQMWADRINETAKQIPAEELIDTVLIVSAHSLPEKIKQHNDPYPDQLQETADLIFDKVAVPHYALGWQSEGKTGEPWLGPDVQDLTRELYGREKYKHFIYTPVGFVAEHLEVLYDNDYECKVVTDEVGAAYHRPPMPNADPEFLEVLRTVVWDAYTK.

Residues Y12, R29, 45–46 (RY), S53, and Y124 contribute to the Fe-coproporphyrin III site. Fe(2+) is bound by residues H182 and E263.

Belongs to the ferrochelatase family.

It is found in the cytoplasm. The catalysed reaction is Fe-coproporphyrin III + 2 H(+) = coproporphyrin III + Fe(2+). It functions in the pathway porphyrin-containing compound metabolism; protoheme biosynthesis. Involved in coproporphyrin-dependent heme b biosynthesis. Catalyzes the insertion of ferrous iron into coproporphyrin III to form Fe-coproporphyrin III. In Listeria innocua serovar 6a (strain ATCC BAA-680 / CLIP 11262), this protein is Coproporphyrin III ferrochelatase.